Reading from the N-terminus, the 309-residue chain is Methionine synthase (309 aa).

Zn(2+)-binding residues include His-201, Cys-203, Glu-224, and Cys-285.

The protein belongs to the archaeal MetE family. Zn(2+) is required as a cofactor.

It functions in the pathway amino-acid biosynthesis; L-methionine biosynthesis via de novo pathway. Is activated by phosphates. Its function is as follows. Catalyzes the transfer of a methyl group to L-homocysteine resulting in methionine formation. Can use methylcobalamin and methylcobinamide as methyl donors, but methylcobalamin is not considered to be the physiological substrate. It was proposed that, in vivo, a so-far-unidentified enzyme catalyzes methyltransfer from 5-methyltetrahydromethanopterin (5-CH3-H4MPT) to a corrinoid protein, and that the MetE gene product catalyzes the further transfer to L-homocysteine. Is not active with L-cysteine, coenzyme M, coenzyme B, glutathione or dithiothreitol as substrate. In Methanothermobacter marburgensis (strain ATCC BAA-927 / DSM 2133 / JCM 14651 / NBRC 100331 / OCM 82 / Marburg) (Methanobacterium thermoautotrophicum), this protein is Methionine synthase.